The following is a 520-amino-acid chain: MVDQDWIKALVNIPISHAVGVVAASTVIYFLSSCFYNLYLHPLRKIPGPKLAAIGPYLEFYHEVIRDGQYLWEIAKMHDKYGPIVRVNDKEVHIRDPSYYSTIYTAGARKTNKDPATVGAFDVPTATAATVDHDHHRARRGYLNPYFSKRSITNLEPFIHERVTKLLSRFQEHLDNDQVLSLDGAFCALTADVITSRFYGKHYNYLDLPDFHFVVRDGFLGLTKVYHLARFIPVLVTVLKRLPYSCLRLIAPSVSDLLQMRNEIHERGGDEFLSSKTSEAKSSILFGALADTHIPPVERTVERMLDEGTVILFAGTETTSRTLAITFFYLLTHPECLRKLREELNSLPKVEGDRFPLATLENLPYLNGVVHEGFRLAFGPISRSGRVATQENLKYKEHVIPAGTPVSQSTYFMHTDPKIFPEPEKFKPERWIEAAEKKIPLKKYITNFSQGSRQCIGYTMAFAEMYLAMSRIARAYDVELYDTTKADIDMTHARIVAYPKAIPGKTEHVGEIRVKVLKAL.

A helical membrane pass occupies residues Leu-10–Phe-30. An N-linked (GlcNAc...) asparagine glycan is attached at Asn-447. A heme-binding site is contributed by Cys-455.

Belongs to the cytochrome P450 family. It depends on heme as a cofactor.

It is found in the membrane. The protein operates within sesquiterpene biosynthesis; trichothecene biosynthesis. Functionally, cytochrome P450 monooxygenase; part of the core gene cluster that mediates the biosynthesis of trichothecenes, a very large family of chemically related bicyclic sesquiterpene compounds acting as mycotoxins, including T2-toxin. The biosynthesis of trichothecenes begins with the cyclization of farnesyl diphosphate to trichodiene and is catalyzed by the trichodiene synthase TRI5. Trichodiene undergoes a series of oxygenations catalyzed by the cytochrome P450 monooxygenase TRI4. TRI4 controls the addition of four oxygens at C-2, C-3, C-11, and the C-12, C-13-epoxide to form the intermediate isotrichotriol. Isotrichotriol then undergoes a non-enzymatic isomerization and cyclization to form isotrichodermol. During this process, the oxygen at the C-2 position becomes the pyran ring oxygen and the hydroxyl group at C-11 is lost. More complex type A trichothecenes are built by modifying isotrichodermol through a series of paired hydroxylation and acetylation or acylation steps. Isotrichodermol is converted to isotrichodermin by the acetyltransferase TRI101. TRI101 encodes a C-3 transacetylase that acts as a self-protection or resistance factor during biosynthesis and that the presence of a free C-3 hydroxyl group is a key component of Fusarium trichothecene phytotoxicity. A second hydroxyl group is added to C-15 by the trichothecene C-15 hydroxylase TRI11, producing 15-decalonectrin, which is then acetylated by TRI3, producing calonectrin. A third hydroxyl group is added at C-4 by the cytochrome P450 monooxygenase TRI13, converting calonectrin to 3,15-diacetoxyspirpenol, which is subsequently acetylated by the acetyltransferase TRI7. A fourth hydroxyl group is added to C-8 by the cytochrome P450 monooxygenase TRI1, followed by the addition of an isovaleryl moiety by TRI16. Finally, the acetyl group is removed from the C-3 position by the trichothecene C-3 esterase TRI8 to produce T-2 toxin. The chain is Cytochrome P450 monooxygenase TRI4 from Fusarium sporotrichioides.